A 215-amino-acid chain; its full sequence is Peptide methionine sulfoxide reductase MsrA (215 aa).

Residue Cys58 is part of the active site.

It belongs to the MsrA Met sulfoxide reductase family.

It carries out the reaction L-methionyl-[protein] + [thioredoxin]-disulfide + H2O = L-methionyl-(S)-S-oxide-[protein] + [thioredoxin]-dithiol. The catalysed reaction is [thioredoxin]-disulfide + L-methionine + H2O = L-methionine (S)-S-oxide + [thioredoxin]-dithiol. Functionally, has an important function as a repair enzyme for proteins that have been inactivated by oxidation. Catalyzes the reversible oxidation-reduction of methionine sulfoxide in proteins to methionine. This chain is Peptide methionine sulfoxide reductase MsrA, found in Pseudomonas savastanoi pv. phaseolicola (strain 1448A / Race 6) (Pseudomonas syringae pv. phaseolicola (strain 1448A / Race 6)).